A 302-amino-acid polypeptide reads, in one-letter code: Heme A synthase (302 aa).

The Cytoplasmic segment spans residues 1–8 (MFRKQNLK). The chain crosses the membrane as a helical span at residues 9–29 (WLGVLATIIMTFVQLGGALVT). Over 30-67 (KTGSEDGCGSSWPLCNGALLPENLPIQTIIELSHRAVS) the chain is Extracellular. Cys37 and Cys44 are joined by a disulfide. Glu60 is a catalytic residue. His63 contributes to the heme o binding site. A helical transmembrane segment spans residues 68–88 (AISLIVVLWLVITAWKNIGYI). Topologically, residues 89–93 (KEIKP) are cytoplasmic. A helical transmembrane segment spans residues 94–114 (LSIISVGFLLVQALVGAAAVI). The Extracellular segment spans residues 115 to 125 (WQQNPYVLALH). His125 provides a ligand contact to heme o. The chain crosses the membrane as a helical span at residues 126 to 146 (FGISLISFSSVFLMTLIIFSI). At 147–161 (DKKYEADILFIHKPL) the chain is on the cytoplasmic side. A helical membrane pass occupies residues 162–182 (RILTWLMAIIVYLTIYTGALV). Over 183 to 215 (RHTKSSLAYGAWPIPFDDIVPHNAHDWVQFSHR) the chain is Extracellular. His214 contacts heme b. The helical transmembrane segment at 216–236 (GMAFITFIWIMITFIHAIKNY) threads the bilayer. Residues 237 to 244 (SDNRTVRY) are Cytoplasmic-facing. The chain crosses the membrane as a helical span at residues 245-265 (GYTASFILVILQVITGALSVI). The Extracellular segment spans residues 266 to 270 (TNVNL). The helical transmembrane segment at 271-291 (IIALFHALFITYLFGMIAYFI) threads the bilayer. Residue His276 coordinates heme b. The Cytoplasmic portion of the chain corresponds to 292 to 302 (LLMLRTTRSLK).

Belongs to the COX15/CtaA family. Type 1 subfamily. Interacts with CtaB. It depends on heme b as a cofactor.

Its subcellular location is the cell membrane. It carries out the reaction Fe(II)-heme o + 2 A + H2O = Fe(II)-heme a + 2 AH2. It functions in the pathway porphyrin-containing compound metabolism; heme A biosynthesis; heme A from heme O: step 1/1. Functionally, catalyzes the conversion of heme O to heme A by two successive hydroxylations of the methyl group at C8. The first hydroxylation forms heme I, the second hydroxylation results in an unstable dihydroxymethyl group, which spontaneously dehydrates, resulting in the formyl group of heme A. In Staphylococcus epidermidis (strain ATCC 12228 / FDA PCI 1200), this protein is Heme A synthase.